Here is a 300-residue protein sequence, read N- to C-terminus: Integrin-binding sialoprotein (300 aa).

A disordered region spans residues 41 to 258 (RFPVQSSSDS…YEQTGAHEYD (218 aa)). Phosphoserine is present on residues S46, S51, S59, S60, S82, and S90. A compositionally biased stretch (low complexity) spans 46 to 58 (SSSDSSEENGNGD). A compositionally biased stretch (acidic residues) spans 59–92 (SSEEEEEEEENSNEEENNEENEDSDGNEDEDSEA). The segment covering 93-102 (ENITLSTTTL) has biased composition (polar residues). The N-linked (GlcNAc...) asparagine glycan is linked to N94. The segment covering 125 to 136 (KAGDIGKKSAKE) has biased composition (basic and acidic residues). Residues 137 to 160 (EESDEDEEEEEENEENEAEVDDNE) are compositionally biased toward acidic residues. Phosphoserine is present on S139. 3 stretches are compositionally biased toward polar residues: residues 161–173 (QGTNGTSTNSTEV), 193–202 (VTEAQGTTVA), and 229–243 (ISGTTLPPSGKTTTP). 2 N-linked (GlcNAc...) asparagine glycosylation sites follow: N164 and N169. S266 carries the post-translational modification Phosphoserine. The Integrin-binding motif signature appears at 272 to 274 (RGD). Position 293 is a phosphoserine (S293). Y299 and Y300 each carry sulfotyrosine.

Monomer. Interacts with integrins; the interaction promotes cell adhesion.

It localises to the secreted. Functionally, binds tightly to hydroxyapatite. Appears to form an integral part of the mineralized matrix. Probably important to cell-matrix interaction. Promotes adhesion and migration of various cells via the alpha-V/beta-3 integrin receptor (ITGAV:ITGB3). The chain is Integrin-binding sialoprotein (IBSP) from Sus scrofa (Pig).